Consider the following 476-residue polypeptide: MLTIFIVTATLFAILYLYFTRNFNYWKDRNVVGPEPTVFFGNIMESVIRRKHLIMIYKDIYEAFPKEKVVGIYRMTTPCLLLRDLDVIKHVMIKDFDLFNDRGVEFSEEGLGLNIFHADGDRWRVLRQCFTPLFTSGKLKNMLNLMSDRGDKFIKMVEKICDKEPEQQIIPLVRKFTMASITTCAFGMELDEEMIETLDKLDSLIFTTSYGNEIDMMYPGILKKLNSSLFSKMIAPFFDNLTKTIIEQRGGKPTNRKDLMDLILELRQKKAIEPMKKTHDEQVTTLELTDSVIAAQTFIFYAAGYETSASTMSFLLFELAENPDIQEKVIAEVDETLKRHNGEITYDTLSEMTYLTQVFHETLRKYPVADILLRNAKADYAVPGTNVTLKKGQTVVVSGFGIHYDPKYYPDPEKFDPERFSPENVRNRHPCAYIPFGAGQRKCLGMRFGQWQVQVCIIKLLSKFRFEPSTKTMSEF.

Heme is bound at residue Cys-443.

This sequence belongs to the cytochrome P450 family. The cofactor is heme.

Its subcellular location is the endoplasmic reticulum membrane. It localises to the microsome membrane. The catalysed reaction is an organic molecule + reduced [NADPH--hemoprotein reductase] + O2 = an alcohol + oxidized [NADPH--hemoprotein reductase] + H2O + H(+). Enables the insect to feed on furanocoumarin-producing plants and evolved as an adaptation for detoxification of xanthotoxin and other furanocoumarins. The chain is Cytochrome P450 6B5 (CYP6B5) from Papilio glaucus (Eastern tiger swallowtail butterfly).